Reading from the N-terminus, the 251-residue chain is Triosephosphate isomerase (251 aa).

9–11 contacts substrate; it reads NWK. His95 (electrophile) is an active-site residue. The active-site Proton acceptor is Glu167. Substrate contacts are provided by residues Gly173, Ser213, and 234-235; that span reads GG.

The protein belongs to the triosephosphate isomerase family. As to quaternary structure, homodimer.

The protein resides in the cytoplasm. The catalysed reaction is D-glyceraldehyde 3-phosphate = dihydroxyacetone phosphate. It functions in the pathway carbohydrate biosynthesis; gluconeogenesis. It participates in carbohydrate degradation; glycolysis; D-glyceraldehyde 3-phosphate from glycerone phosphate: step 1/1. Its function is as follows. Involved in the gluconeogenesis. Catalyzes stereospecifically the conversion of dihydroxyacetone phosphate (DHAP) to D-glyceraldehyde-3-phosphate (G3P). This chain is Triosephosphate isomerase, found in Geobacter metallireducens (strain ATCC 53774 / DSM 7210 / GS-15).